Consider the following 76-residue polypeptide: Exodeoxyribonuclease 7 small subunit (76 aa).

It belongs to the XseB family. As to quaternary structure, heterooligomer composed of large and small subunits.

The protein resides in the cytoplasm. It catalyses the reaction Exonucleolytic cleavage in either 5'- to 3'- or 3'- to 5'-direction to yield nucleoside 5'-phosphates.. In terms of biological role, bidirectionally degrades single-stranded DNA into large acid-insoluble oligonucleotides, which are then degraded further into small acid-soluble oligonucleotides. This Legionella pneumophila (strain Paris) protein is Exodeoxyribonuclease 7 small subunit.